We begin with the raw amino-acid sequence, 232 residues long: Ubiquinone biosynthesis O-methyltransferase (232 aa).

S-adenosyl-L-methionine contacts are provided by Arg36, Gly55, Asp76, and Leu120.

It belongs to the methyltransferase superfamily. UbiG/COQ3 family.

It catalyses the reaction a 3-demethylubiquinol + S-adenosyl-L-methionine = a ubiquinol + S-adenosyl-L-homocysteine + H(+). The enzyme catalyses a 3-(all-trans-polyprenyl)benzene-1,2-diol + S-adenosyl-L-methionine = a 2-methoxy-6-(all-trans-polyprenyl)phenol + S-adenosyl-L-homocysteine + H(+). It functions in the pathway cofactor biosynthesis; ubiquinone biosynthesis. Functionally, O-methyltransferase that catalyzes the 2 O-methylation steps in the ubiquinone biosynthetic pathway. This Pseudomonas entomophila (strain L48) protein is Ubiquinone biosynthesis O-methyltransferase.